The following is a 425-amino-acid chain: Serine--tRNA ligase (425 aa).

Residue 233-235 (TAE) coordinates L-serine. Position 264–266 (264–266 (RRE)) interacts with ATP. Residue E287 participates in L-serine binding. 351 to 354 (EISS) contributes to the ATP binding site. Residue S385 participates in L-serine binding.

Belongs to the class-II aminoacyl-tRNA synthetase family. Type-1 seryl-tRNA synthetase subfamily. As to quaternary structure, homodimer. The tRNA molecule binds across the dimer.

It localises to the cytoplasm. The enzyme catalyses tRNA(Ser) + L-serine + ATP = L-seryl-tRNA(Ser) + AMP + diphosphate + H(+). It catalyses the reaction tRNA(Sec) + L-serine + ATP = L-seryl-tRNA(Sec) + AMP + diphosphate + H(+). The protein operates within aminoacyl-tRNA biosynthesis; selenocysteinyl-tRNA(Sec) biosynthesis; L-seryl-tRNA(Sec) from L-serine and tRNA(Sec): step 1/1. Catalyzes the attachment of serine to tRNA(Ser). Is also able to aminoacylate tRNA(Sec) with serine, to form the misacylated tRNA L-seryl-tRNA(Sec), which will be further converted into selenocysteinyl-tRNA(Sec). The chain is Serine--tRNA ligase from Prochlorococcus marinus (strain AS9601).